The primary structure comprises 30 residues: Thrombin-like enzyme LmrSP-2 (30 aa).

This sequence belongs to the peptidase S1 family. Snake venom subfamily. In terms of tissue distribution, expressed by the venom gland.

The protein resides in the secreted. Thrombin-like snake venom serine protease that cleaves alpha-chain of fibrinogen (FGA) releases only fibrinopeptide A. Shows coagulant, esterase and amidase activities. This Lachesis muta rhombeata (Bushmaster) protein is Thrombin-like enzyme LmrSP-2.